A 335-amino-acid chain; its full sequence is Carboxylesterase 1 (335 aa).

The short motif at 90-92 is the Involved in the stabilization of the negatively charged intermediate by the formation of the oxyanion hole element; the sequence is HGG. Paraoxon contacts are provided by residues 92–93, serine 169, and alanine 170; that span reads GG. The active site involves serine 169. Active-site residues include aspartate 276 and histidine 306.

It belongs to the 'GDXG' lipolytic enzyme family.

The catalysed reaction is a carboxylic ester + H2O = an alcohol + a carboxylate + H(+). Its activity is regulated as follows. Is inhibited by the organophosphates paraoxon and dimethylchlorophosphate (DMCP). In terms of biological role, carboxylesterase acting on esters with varying acyl chain length. The sequence is that of Carboxylesterase 1 (CXE1) from Actinidia eriantha (Velvet vine).